Consider the following 420-residue polypeptide: MDTATPSAEAILRTAAGRARAAMRSLAAMPAARRDGALRAAAAELRIHAVNILAANARDLDSFEGPPAMRDRLLLNEARIEAIAAGIDAIADLPDPLAGSLAEWTRPNGLVIRRVPQPLGVIGMIYESRPNVGADAAAICIKSGNAVILRGGSESYHSNTAIYLAMTKGLRQAGFPDGTVQIAPNIDRAFVAAMLGASGQIDLIIPRGGKSLVERVQREARVPVLAHAEGLNHTYIHAEADAEMARTVLANAKMRRTGICGATETLLIDAAIAPALLPRLIEDLAALGCGFRADDRARAIVPSLPAAGPADFDTEWLDAMLSVSVVDDLDAALDHIARHGSSHTEAIVTENADAAARFLAGTDSAVAMWNASTQFCDGGEFGFGAEIGIATGRIHARGPIGPAQLTTFRYHVVGTGQVRP.

It belongs to the gamma-glutamyl phosphate reductase family.

Its subcellular location is the cytoplasm. The catalysed reaction is L-glutamate 5-semialdehyde + phosphate + NADP(+) = L-glutamyl 5-phosphate + NADPH + H(+). Its pathway is amino-acid biosynthesis; L-proline biosynthesis; L-glutamate 5-semialdehyde from L-glutamate: step 2/2. Its function is as follows. Catalyzes the NADPH-dependent reduction of L-glutamate 5-phosphate into L-glutamate 5-semialdehyde and phosphate. The product spontaneously undergoes cyclization to form 1-pyrroline-5-carboxylate. This is Gamma-glutamyl phosphate reductase from Acidiphilium cryptum (strain JF-5).